The sequence spans 463 residues: uncharacterized protein (463 aa).

The protein belongs to the mycobacterial PPE family.

This is an uncharacterized protein from Mycobacterium tuberculosis (strain ATCC 25618 / H37Rv).